Reading from the N-terminus, the 389-residue chain is Indole-3-acetate monooxygenase (389 aa).

Belongs to the HpaH/HsaA monooxygenase family.

It catalyses the reaction (indol-3-yl)acetate + NADH + O2 + H(+) = 2-hydroxy-(1H-indol-3-yl)acetate + NAD(+) + H2O. The enzyme catalyses indole + NADH + O2 + H(+) = indoxyl + NAD(+) + H2O. Functionally, involved in the degradation of the plant hormone indole-3-acetic acid (IAA). Catalyzes the first step of the pathway, the conversion of IAA to 2-hydroxy-IAA (2-OH-IAA). Can also convert indole to indoxyl, which spontaneously dimerizes in the presence of oxygen to form the blue pigment indigo. The sequence is that of Indole-3-acetate monooxygenase from Acinetobacter baumannii (strain ATCC 19606 / DSM 30007 / JCM 6841 / CCUG 19606 / CIP 70.34 / NBRC 109757 / NCIMB 12457 / NCTC 12156 / 81).